The following is a 469-amino-acid chain: MTTKTRFAPSPTGFLHVGGARTALYSWLQARANNGEFVLRIEDTDIERSTQAACDAILEGMNWLGLTWDEGPYYQTKRFDRYNEIIAQMLEKGTAYKCYCSRERIDALRESQAANGEAQKYDGCCRDLPARDTDEPFVVRFKNPIGGSVVFDDHVRGRIEFSNDALDDLIIARTDGVPTYNFCVVVDDWDMGITCVVRGEDHINNTPRQINILKALGAPIPEYAHVSMILGDDGAKLSKRHGAVSVMQYRDDGYLPEALLNYLVRLGWSHGDQEVFSLEEMKQYFKLDDINKAPSAFNTDKLVWLNQHYIKTLDPEYVATHLQWHMDDQKIDTSNGPALAEVVTALAERAKTLKELAASSRYFYEDFADFDAEQAKKHLRGVALEPLQLVQQKLAALTEWTVEAIHQAIEQTATELDVGMGKVGMPLRVSVTGAGQSPGLDITLFLIGRSRSEQRISKAIEFVADRINS.

Residues 9–19 carry the 'HIGH' region motif; sequence PSPTGFLHVGG. Zn(2+)-binding residues include Cys-98, Cys-100, Cys-125, and Asp-127. Residues 236-240 carry the 'KMSKS' region motif; sequence KLSKR. Lys-239 contributes to the ATP binding site.

The protein belongs to the class-I aminoacyl-tRNA synthetase family. Glutamate--tRNA ligase type 1 subfamily. In terms of assembly, monomer. Zn(2+) serves as cofactor.

It localises to the cytoplasm. It catalyses the reaction tRNA(Glu) + L-glutamate + ATP = L-glutamyl-tRNA(Glu) + AMP + diphosphate. Functionally, catalyzes the attachment of glutamate to tRNA(Glu) in a two-step reaction: glutamate is first activated by ATP to form Glu-AMP and then transferred to the acceptor end of tRNA(Glu). This Shewanella sp. (strain W3-18-1) protein is Glutamate--tRNA ligase.